The chain runs to 576 residues: MRPAAAKVPKWLLLALSALLPQWPAASAWELTILHTNDVHSRLEQTSDDSTKCLNASLCVGGVARLFTKVQQIRKEEPNVLFLDAGDQYQGTIWFTVYKGLEVAHFMNILGYDAMALGNHEFDNGVEGLIDPLLRNVKFPILSANIKARGPLAHQISGLFLPSKVLSVGGEVVGIVGYTSKETPFLSNPGTNLVFEDEISALQPEVDKLKTLNVNKIIALGHSGFEMDKLIAQKVRGVDIVVGGHSNTFLYTGNPPSKEVPAGKYPFIVTADDGRQVPVVQAYAFGKYLGYLKVEFDDKGNVITSYGNPILLNSSIPEDATIKADINQWRIKLDNYSTQELGRTIVYLDGSTQTCRFRECNMGNLICDAMINNNLRHPDEMFWNHVSMCIVNGGGIRSPIDEKNNGTITWENLAAVLPFGGTFDLVQLKGSTLKKAFEHSVHRYGQSTGEFLQVGGIHVVYDINRKPWNRVVQLEVLCTKCRVPIYEPLEMDKVYKVTLPSYLANGGDGFQMIKDELLKHDSGDQDISVVSEYISKMKVVYPAVEGRIKFSAASHYQGSFPLVILSFWAMILILYQ.

The N-terminal stretch at 1 to 28 is a signal peptide; it reads MRPAAAKVPKWLLLALSALLPQWPAASA. The Zn(2+) site is built by D38 and H40. Residues C53 and C59 are joined by a disulfide bond. Residue N55 is glycosylated (N-linked (GlcNAc...) asparagine). 4 residues coordinate Zn(2+): D87, N119, H222, and H245. N-linked (GlcNAc...) asparagine glycans are attached at residues N313 and N335. 2 disulfide bridges follow: C355–C360 and C367–C389. R356 is a binding site for AMP. An IMP-binding site is contributed by R356. Positions 392 and 397 each coordinate AMP. Residues N392 and R397 each contribute to the IMP site. N-linked (GlcNAc...) asparagine glycosylation occurs at N405. F419 contributes to the AMP binding site. F419 contacts IMP. C478 and C481 are oxidised to a cystine. Positions 502 and 508 each coordinate AMP. IMP-binding residues include Y502 and D508. S551 is lipidated: GPI-anchor amidated serine. Positions 552–576 are cleaved as a propeptide — removed in mature form; sequence AASHYQGSFPLVILSFWAMILILYQ.

Belongs to the 5'-nucleotidase family. As to quaternary structure, homodimer. Zn(2+) is required as a cofactor. As to expression, expressed at high levels in the placenta, kidney, lung and stomach and at lower levels in the thymus, spleen, skeletal muscle and esophagus.

The protein resides in the cell membrane. It carries out the reaction a ribonucleoside 5'-phosphate + H2O = a ribonucleoside + phosphate. The catalysed reaction is a 2'-deoxyribonucleoside 5'-phosphate + H2O = a 2'-deoxyribonucleoside + phosphate. The enzyme catalyses dTMP + H2O = thymidine + phosphate. It catalyses the reaction CMP + H2O = cytidine + phosphate. It carries out the reaction IMP + H2O = inosine + phosphate. The catalysed reaction is AMP + H2O = adenosine + phosphate. The enzyme catalyses GMP + H2O = guanosine + phosphate. It catalyses the reaction UMP + H2O = uridine + phosphate. It carries out the reaction dAMP + H2O = 2'-deoxyadenosine + phosphate. The catalysed reaction is dCMP + H2O = 2'-deoxycytidine + phosphate. Functionally, catalyzes the hydrolysis of nucleotide monophosphates, releasing inorganic phosphate and the corresponding nucleoside. Hydrolyzes IMP. Shows a preference for ribonucleotide monophosphates over their equivalent deoxyribose forms. Although AMP is the preferred substrate can also hydrolyze UMP, GMP, CMP, dAMP, dCMP, dTMP, NAD and NMN. This Mus musculus (Mouse) protein is 5'-nucleotidase (Nt5e).